The following is a 264-amino-acid chain: Fibroblast growth factor 5 (264 aa).

The first 20 residues, 1–20, serve as a signal peptide directing secretion; that stretch reads MSLSLLFLIFCSHLIHSAWA. The tract at residues 25 to 81 is disordered; that stretch reads RLTPEGQPAPPRNPGDSSGSRGRSSATFSSSSASSPVAASPGSQGSGSEHSSFQWSP. Over residues 38 to 72 the composition is skewed to low complexity; the sequence is PGDSSGSRGRSSATFSSSSASSPVAASPGSQGSGS. N108 carries N-linked (GlcNAc...) asparagine glycosylation. A disordered region spans residues 227–254; it reads FTVTVPEKKKPPVKPKVPLSQPRRSPSP.

Belongs to the heparin-binding growth factors family. Interacts with FGFR1 and FGFR2. Affinity between fibroblast growth factors (FGFs) and their receptors is increased by heparan sulfate glycosaminoglycans that function as coreceptors.

Its subcellular location is the secreted. In terms of biological role, plays an important role in the regulation of cell proliferation and cell differentiation. Required for normal regulation of the hair growth cycle. Functions as an inhibitor of hair elongation by promoting progression from anagen, the growth phase of the hair follicle, into catagen the apoptosis-induced regression phase. This is Fibroblast growth factor 5 (Fgf5) from Mus musculus (Mouse).